Consider the following 668-residue polypeptide: DNA ligase (668 aa).

NAD(+) is bound by residues 35 to 39 (DKEYD) and 83 to 84 (SL). Catalysis depends on Lys-125, which acts as the N6-AMP-lysine intermediate. Arg-147, Glu-181, and Lys-317 together coordinate NAD(+). Positions 410, 413, 426, and 432 each coordinate Zn(2+). In terms of domain architecture, BRCT spans 591–668 (KKDNKFNGKT…TEEEFNEMIN (78 aa)).

It belongs to the NAD-dependent DNA ligase family. LigA subfamily. Mg(2+) serves as cofactor. Mn(2+) is required as a cofactor.

The catalysed reaction is NAD(+) + (deoxyribonucleotide)n-3'-hydroxyl + 5'-phospho-(deoxyribonucleotide)m = (deoxyribonucleotide)n+m + AMP + beta-nicotinamide D-nucleotide.. DNA ligase that catalyzes the formation of phosphodiester linkages between 5'-phosphoryl and 3'-hydroxyl groups in double-stranded DNA using NAD as a coenzyme and as the energy source for the reaction. It is essential for DNA replication and repair of damaged DNA. In Clostridium tetani (strain Massachusetts / E88), this protein is DNA ligase.